A 178-amino-acid chain; its full sequence is MIITIGGLPGTGTTTIAKLISEKYNLNHVCAGFIFRDMAKEMGMGLQEFSKYAEENPNIDHEIDRKQVELAKEGNIVLEGRLATWMLKKNSVEPTISIWLRAPSMVRCERISERECEDINTALNKMINRENSEKKRYKELYDINIDDLSIYDIIINSSAWNIEGVFSIIDRAIANKSK.

Residue 7 to 15 participates in ATP binding; sequence GLPGTGTTT.

Belongs to the cytidylate kinase family. Type 2 subfamily.

The protein localises to the cytoplasm. It catalyses the reaction CMP + ATP = CDP + ADP. It carries out the reaction dCMP + ATP = dCDP + ADP. The polypeptide is Cytidylate kinase (Methanococcus aeolicus (strain ATCC BAA-1280 / DSM 17508 / OCM 812 / Nankai-3)).